The following is a 228-amino-acid chain: Phosphoglycolate phosphatase (228 aa).

D9 functions as the Nucleophile in the catalytic mechanism. Positions 9 and 11 each coordinate Mg(2+). A substrate-binding site is contributed by K151. Mg(2+) contacts are provided by D174 and D178.

Belongs to the archaeal SPP-like hydrolase family. Requires Mg(2+) as cofactor.

The enzyme catalyses 2-phosphoglycolate + H2O = glycolate + phosphate. Its function is as follows. Catalyzes the dephosphorylation of 2-phosphoglycolate. This Pyrobaculum aerophilum (strain ATCC 51768 / DSM 7523 / JCM 9630 / CIP 104966 / NBRC 100827 / IM2) protein is Phosphoglycolate phosphatase.